A 221-amino-acid polypeptide reads, in one-letter code: Molybdenum cofactor guanylyltransferase (221 aa).

Residues 18–20 (IAG), Lys35, Asn63, Asp81, and Asp112 contribute to the GTP site. Asp112 contributes to the Mg(2+) binding site.

It belongs to the MobA family. In terms of assembly, monomer. Mg(2+) is required as a cofactor.

It localises to the cytoplasm. It carries out the reaction Mo-molybdopterin + GTP + H(+) = Mo-molybdopterin guanine dinucleotide + diphosphate. Transfers a GMP moiety from GTP to Mo-molybdopterin (Mo-MPT) cofactor (Moco or molybdenum cofactor) to form Mo-molybdopterin guanine dinucleotide (Mo-MGD) cofactor. The chain is Molybdenum cofactor guanylyltransferase from Brucella abortus (strain S19).